We begin with the raw amino-acid sequence, 413 residues long: Serine--tRNA ligase (413 aa).

221–223 (TAE) is an L-serine binding site. 252–254 (RRE) provides a ligand contact to ATP. Position 275 (Glu-275) interacts with L-serine. ATP is bound at residue 339–342 (EVSS). Ser-375 contributes to the L-serine binding site.

The protein belongs to the class-II aminoacyl-tRNA synthetase family. Type-1 seryl-tRNA synthetase subfamily. In terms of assembly, homodimer. The tRNA molecule binds across the dimer.

It is found in the cytoplasm. The catalysed reaction is tRNA(Ser) + L-serine + ATP = L-seryl-tRNA(Ser) + AMP + diphosphate + H(+). It carries out the reaction tRNA(Sec) + L-serine + ATP = L-seryl-tRNA(Sec) + AMP + diphosphate + H(+). The protein operates within aminoacyl-tRNA biosynthesis; selenocysteinyl-tRNA(Sec) biosynthesis; L-seryl-tRNA(Sec) from L-serine and tRNA(Sec): step 1/1. Functionally, catalyzes the attachment of serine to tRNA(Ser). Is also able to aminoacylate tRNA(Sec) with serine, to form the misacylated tRNA L-seryl-tRNA(Sec), which will be further converted into selenocysteinyl-tRNA(Sec). The sequence is that of Serine--tRNA ligase from Dehalococcoides mccartyi (strain ATCC BAA-2266 / KCTC 15142 / 195) (Dehalococcoides ethenogenes (strain 195)).